The chain runs to 112 residues: UPF0212 protein Mpal_1084 (112 aa).

It belongs to the UPF0212 family.

The polypeptide is UPF0212 protein Mpal_1084 (Methanosphaerula palustris (strain ATCC BAA-1556 / DSM 19958 / E1-9c)).